The following is an 892-amino-acid chain: DNA mismatch repair protein MutS (892 aa).

607-614 provides a ligand contact to ATP; it reads GPNMSGKS. Positions 833-855 are disordered; it reads EESQLSFFGAEQSSKKQDKPALD. Basic and acidic residues predominate over residues 845-855; the sequence is SSKKQDKPALD.

The protein belongs to the DNA mismatch repair MutS family.

Functionally, this protein is involved in the repair of mismatches in DNA. It is possible that it carries out the mismatch recognition step. This protein has a weak ATPase activity. This chain is DNA mismatch repair protein MutS, found in Bacillus anthracis (strain A0248).